The primary structure comprises 1863 residues: Breast cancer type 1 susceptibility protein (1863 aa).

Position 1 is an N-acetylmethionine (Met1). The RING-type zinc finger occupies 24–65; it reads CPICLELIKEPVSTKCDHIFCKFCMLKLLNQKKGPSQCPLCK. Residue Lys109 forms a Glycyl lysine isopeptide (Lys-Gly) (interchain with G-Cter in SUMO2) linkage. A Phosphoserine modification is found at Ser114. Positions 230 to 270 are disordered; sequence ETDVTNTEHHQPSNNDLNTTEKRAAERHPEKYQGSSVSNLH. The span at 248–260 shows a compositional bias: basic and acidic residues; that stretch reads TTEKRAAERHPEK. Lys301 is covalently cross-linked (Glycyl lysine isopeptide (Lys-Gly) (interchain with G-Cter in SUMO2)). Positions 306–338 are disordered; it reads NKSKQPGLARSQHNRWAGSKETCNDRRTPSTEK. Over residues 327-338 the composition is skewed to basic and acidic residues; that stretch reads TCNDRRTPSTEK. Lys339 is covalently cross-linked (Glycyl lysine isopeptide (Lys-Gly) (interchain with G-Cter in SUMO2)). Ser395, Ser398, Ser423, and Ser434 each carry phosphoserine. Glycyl lysine isopeptide (Lys-Gly) (interchain with G-Cter in SUMO2) cross-links involve residues Lys443, Lys459, and Lys519. Over residues 534 to 544 the composition is skewed to low complexity; sequence QGTNQTEQNGQ. The segment at 534–570 is disordered; sequence QGTNQTEQNGQVMNITNSGHENKTKGDSIQNEKNPNP. Phosphoserine is present on Ser551. Residues Lys583 and Lys654 each participate in a glycyl lysine isopeptide (Lys-Gly) (interchain with G-Cter in SUMO2) cross-link. A disordered region spans residues 654-709; sequence KYNQMPVRHSRNLQLMEGKEPATGAKKSNKPNEQTSKRHDSDTFPELKLTNAPGSF. Ser694, Ser708, and Ser725 each carry phosphoserine. Glycyl lysine isopeptide (Lys-Gly) (interchain with G-Cter in SUMO2) cross-links involve residues Lys734 and Lys739. Phosphoserine occurs at positions 753 and 840. Residues Lys918 and Lys987 each participate in a glycyl lysine isopeptide (Lys-Gly) (interchain with G-Cter in SUMO2) cross-link. Ser988 bears the Phosphoserine; by CHEK2 mark. Phosphoserine is present on Ser1009. Lys1079 participates in a covalent cross-link: Glycyl lysine isopeptide (Lys-Gly) (interchain with G-Cter in SUMO2). A Phosphoserine; by ATR; in vitro modification is found at Ser1143. The tract at residues 1181–1216 is disordered; that stretch reads VQKGELSRSPSPFTHTHLAQGYRRGAKKLESSEENL. Phosphoserine occurs at positions 1189, 1191, 1211, 1217, and 1218. Residue Ser1280 is modified to Phosphoserine; by ATR; in vitro. The disordered stretch occupies residues 1322–1387; that stretch reads KQMRHQSESQ…VSEDCSGLSS (66 aa). Residues Ser1328, Ser1336, and Ser1342 each carry the phosphoserine modification. A compositionally biased stretch (polar residues) spans 1373 to 1387; the sequence is ESETSVSEDCSGLSS. At Ser1387 the chain carries Phosphoserine; by ATM and ATR. At Thr1394 the chain carries Phosphothreonine; by ATR; in vitro. The interaction with PALB2 stretch occupies residues 1397-1424; it reads RDTMQHNLIKLQQEMAELEAVLEQHGSQ. At Ser1423 the chain carries Phosphoserine; by ATM and ATR. The interval 1440 to 1505 is disordered; sequence EDLRNPEQST…SSPSKCPSLD (66 aa). A compositionally biased stretch (polar residues) spans 1445–1470; sequence PEQSTSEKAVLTSQKSSEYPISQNPE. Residue Ser1457 is modified to Phosphoserine; by ATR; in vitro. Position 1524 is a phosphoserine; by ATM (Ser1524). A Phosphoserine modification is found at Ser1542. The tract at residues 1565-1596 is disordered; it reads ESGISLFSDDPESDPSEDRAPESARVGNIPSS. BRCT domains follow at residues 1642 to 1736 and 1756 to 1855; these read STER…DFEV and QDRK…TYLI.

Heterodimer with BARD1. Part of the BRCA1-associated genome surveillance complex (BASC), which contains BRCA1, MSH2, MSH6, MLH1, ATM, BLM, PMS2 and the MRE11-RAD50-NBN protein (MRN) complex. This association could be a dynamic process changing throughout the cell cycle and within subnuclear domains. Component of the BRCA1-A complex, at least composed of BRCA1, BARD1, UIMC1/RAP80, ABRAXAS1, BRCC3/BRCC36, BABAM2 and BABAM1/NBA1. Interacts (via the BRCT domains) with ABRAXAS1 (phosphorylated form); this is important for recruitment to sites of DNA damage. Can form a heterotetramer with two molecules of ABRAXAS1 (phosphorylated form). Component of the BRCA1-RBBP8 complex. Interacts (via the BRCT domains) with RBBP8 ('Ser-327' phosphorylated form); the interaction ubiquitinates RBBP8, regulates CHEK1 activation, and involves RBBP8 in BRCA1-dependent G2/M checkpoint control on DNA damage. Associates with RNA polymerase II holoenzyme. Interacts with SMC1A, NELFB, DCLRE1C, CLSPN. Interacts with CHEK1, CHEK2, BAP1, BRCC3, UBXN1 and PCLAF. Interacts (via BRCT domains) with BRIP1 (phosphorylated form). Interacts with FANCD2 (ubiquitinated form). Interacts with H2AX (phosphorylated on 'Ser-140'). Interacts (via the BRCT domains) with ACACA (phosphorylated form); the interaction prevents dephosphorylation of ACACA. Part of a BRCA complex containing BRCA1, BRCA2 and PALB2. Interacts directly with PALB2; the interaction is essential for its function in HRR. Interacts directly with BRCA2; the interaction occurs only in the presence of PALB2 which serves as the bridging protein. Interacts (via the BRCT domains) with LMO4; the interaction represses the transcriptional activity of BRCA1. Interacts (via the BRCT domains) with CCAR2 (via N-terminus); the interaction represses the transcriptional activator activity of BRCA1. Interacts with EXD2. Interacts (via C-terminus) with DHX9; this interaction is direct and links BRCA1 to the RNA polymerase II holoenzyme. Interacts with DNA helicase ZGRF1; the interaction is increased following DNA damage induction. Phosphorylated in response to IR, UV, and various stimuli that cause checkpoint activation, probably by ATM or ATR. Phosphorylation at Ser-988 by CHEK2 regulates mitotic spindle assembly. Phosphorylation by AURKA regulates centrosomal microtubule nucleation. Post-translationally, autoubiquitinated, undergoes 'Lys-6'-linked polyubiquitination. 'Lys-6'-linked polyubiquitination does not promote degradation. In terms of tissue distribution, isoform 1 and isoform 3 are widely expressed. Isoform 3 is reduced or absent in several breast and ovarian cancer cell lines.

It localises to the nucleus. The protein localises to the chromosome. The protein resides in the cytoplasm. The catalysed reaction is S-ubiquitinyl-[E2 ubiquitin-conjugating enzyme]-L-cysteine + [acceptor protein]-L-lysine = [E2 ubiquitin-conjugating enzyme]-L-cysteine + N(6)-ubiquitinyl-[acceptor protein]-L-lysine.. It participates in protein modification; protein ubiquitination. The E3 ubiquitin-protein ligase activity is inhibited by phosphorylation by AURKA. Activity is increased by phosphatase treatment. Its function is as follows. E3 ubiquitin-protein ligase that specifically mediates the formation of 'Lys-6'-linked polyubiquitin chains and plays a central role in DNA repair by facilitating cellular responses to DNA damage. It is unclear whether it also mediates the formation of other types of polyubiquitin chains. The BRCA1-BARD1 heterodimer coordinates a diverse range of cellular pathways such as DNA damage repair, ubiquitination and transcriptional regulation to maintain genomic stability. Regulates centrosomal microtubule nucleation. Required for appropriate cell cycle arrests after ionizing irradiation in both the S-phase and the G2 phase of the cell cycle. Required for FANCD2 targeting to sites of DNA damage. Inhibits lipid synthesis by binding to inactive phosphorylated ACACA and preventing its dephosphorylation. Contributes to homologous recombination repair (HRR) via its direct interaction with PALB2, fine-tunes recombinational repair partly through its modulatory role in the PALB2-dependent loading of BRCA2-RAD51 repair machinery at DNA breaks. Component of the BRCA1-RBBP8 complex which regulates CHEK1 activation and controls cell cycle G2/M checkpoints on DNA damage via BRCA1-mediated ubiquitination of RBBP8. Acts as a transcriptional activator. This is Breast cancer type 1 susceptibility protein (BRCA1) from Homo sapiens (Human).